A 2522-amino-acid polypeptide reads, in one-letter code: Unconventional myosin-IXAa (2522 aa).

The Ras-associating domain maps to serine 15–leucine 113. Residues lysine 147–histidine 1007 form the Myosin motor domain. A helical membrane pass occupies residues isoleucine 176 to tyrosine 196. Glycine 240–threonine 247 lines the ATP pocket. Positions valine 767–serine 802 are disordered. Over residues serine 777–asparagine 786 the composition is skewed to polar residues. Residues leucine 888–serine 910 form an actin-binding region. IQ domains lie at serine 1012–glutamine 1039, glutamine 1063–leucine 1092, glutamine 1102–arginine 1131, and glutamine 1125–lysine 1154. Positions serine 1012–glutamine 1149 are neck or regulatory domain. A tail region spans residues lysine 1150–arginine 2497. 6 disordered regions span residues glycine 1218–arginine 1254, aspartate 1318–arginine 1409, asparagine 1424–phenylalanine 1612, asparagine 1630–arginine 1754, arginine 1799–arginine 1827, and leucine 1962–aspartate 1983. The span at threonine 1229–glutamine 1242 shows a compositional bias: basic and acidic residues. 2 stretches are compositionally biased toward polar residues: residues serine 1330 to aspartate 1349 and serine 1366 to threonine 1390. Basic and acidic residues-rich tracts occupy residues proline 1399–arginine 1408 and alanine 1426–aspartate 1435. A compositionally biased stretch (polar residues) spans alanine 1437–serine 1454. Positions valine 1456 to glutamate 1525 form a coiled coil. Composition is skewed to basic and acidic residues over residues glutamate 1458–glutamate 1484, isoleucine 1492–arginine 1523, proline 1549–aspartate 1566, and leucine 1580–serine 1589. Composition is skewed to polar residues over residues lysine 1594–methionine 1604 and glutamine 1631–valine 1641. Residues proline 1656–arginine 1665 show a composition bias toward basic residues. The segment covering glycine 1681–glutamate 1690 has biased composition (acidic residues). Composition is skewed to basic and acidic residues over residues leucine 1738 to valine 1753 and leucine 1810 to proline 1822. The Phorbol-ester/DAG-type zinc-finger motif lies at glycine 1990–cysteine 2039. Residues valine 2054 to tyrosine 2242 form the Rho-GAP domain. 2 disordered regions span residues proline 2274–lysine 2325 and leucine 2348–valine 2522. Positions glutamine 2317–glutamate 2344 form a coiled coil. Over residues threonine 2366–aspartate 2383 the composition is skewed to polar residues. Positions serine 2413–serine 2429 are enriched in low complexity. The span at arginine 2436–serine 2448 shows a compositional bias: basic residues. Residues arginine 2497–glutamate 2506 are compositionally biased toward basic and acidic residues.

This sequence belongs to the TRAFAC class myosin-kinesin ATPase superfamily. Myosin family.

The protein localises to the membrane. The protein resides in the cytoplasm. Its subcellular location is the synapse. It is found in the cell projection. It localises to the growth cone. In terms of biological role, myosins are actin-based motor molecules with ATPase activity. Unconventional myosins serve in intracellular movements. Regulates Rho by stimulating it's GTPase activity in neurons. Required for the regulation of neurite branching and motor neuron axon guidance. The protein is Unconventional myosin-IXAa (myo9aa) of Danio rerio (Zebrafish).